The primary structure comprises 198 residues: MSNSAVSYKPIVNIENIVATVTLEQSLDLYAMERSIPNIEYDPDQFPGLIFRLEQPKVTALIFKSGKMVVTGAKSTEELIKAVKRIIKTLKKYGIKIVGKPKIQIQNIVASANLHVNVNLDKAAFLLENNMYEPEQFPGLIFRMDDPRVVLLIFSSGKMVITGAKREDEVSKAVKRIFDKLAELDCVKPIEEEEELEL.

A run of 2 repeats spans residues Ile14–Leu90 and Ile105–Leu181.

Belongs to the TBP family.

Functionally, general factor that plays a role in the activation of archaeal genes transcribed by RNA polymerase. Binds specifically to the TATA box promoter element which lies close to the position of transcription initiation. The sequence is that of TATA-box-binding protein (tbp) from Saccharolobus solfataricus (strain ATCC 35092 / DSM 1617 / JCM 11322 / P2) (Sulfolobus solfataricus).